Reading from the N-terminus, the 47-residue chain is Delta-ctenitoxin-Asp2e (47 aa).

5 disulfide bridges follow: Cys-3-Cys-17, Cys-10-Cys-23, Cys-14-Cys-46, Cys-16-Cys-31, and Cys-25-Cys-29.

As to expression, expressed by the venom gland.

It localises to the secreted. Inhibits the inactivation of voltage-gated sodium channels (Nav). The sequence is that of Delta-ctenitoxin-Asp2e from Ancylometes sp. (South American fishing spider).